The sequence spans 52 residues: Transcriptional regulator SlrA (52 aa).

Residues 1 to 38 (MKTHVKKDLDKGWHMLIQEARSIGLGIHDVRQFLESET) enclose the Sin domain.

As to quaternary structure, component of the SlrR/SlrA complex.

Its function is as follows. Required specifically for induction of eps and yqxM operons by antagonizing SinR. Regulates SlrR activity. Controls the initiation of biofilm formation. This chain is Transcriptional regulator SlrA (slrA), found in Bacillus subtilis (strain 168).